We begin with the raw amino-acid sequence, 186 residues long: MKIAQELRSGNVFMLDGQPMVVQKTEYNKSGRNAAVVKMKMKNLLTGSASEAVYKADEKFDIVVLDKKECTYSYFADPMYVFMDGEFNQYEVEAENMEDVLPFLEDGMTDPCEVVFYEGRAISVELPTTVVREVEYTEPAVRGDTSGKVLKPARLHNGTVIQVAAFVEIGDKIEIDTRTSEFKKRA.

It belongs to the elongation factor P family.

The protein localises to the cytoplasm. The protein operates within protein biosynthesis; polypeptide chain elongation. Its function is as follows. Involved in peptide bond synthesis. Stimulates efficient translation and peptide-bond synthesis on native or reconstituted 70S ribosomes in vitro. Probably functions indirectly by altering the affinity of the ribosome for aminoacyl-tRNA, thus increasing their reactivity as acceptors for peptidyl transferase. In Laribacter hongkongensis (strain HLHK9), this protein is Elongation factor P.